The sequence spans 72 residues: NADH dehydrogenase [ubiquinone] 1 beta subcomplex subunit 3-A (72 aa).

Residues 31–48 (ALPGIGIGVGAFCVYLVG) traverse the membrane as a helical segment.

This sequence belongs to the complex I NDUFB3 subunit family. Complex I is composed of at least 49 different subunits.

It is found in the mitochondrion inner membrane. Functionally, accessory subunit of the mitochondrial membrane respiratory chain NADH dehydrogenase (Complex I), that is believed not to be involved in catalysis. Complex I functions in the transfer of electrons from NADH to the respiratory chain. The immediate electron acceptor for the enzyme is believed to be ubiquinone. The sequence is that of NADH dehydrogenase [ubiquinone] 1 beta subcomplex subunit 3-A from Arabidopsis thaliana (Mouse-ear cress).